A 272-amino-acid polypeptide reads, in one-letter code: uncharacterized protein (272 aa).

Catalysis depends on residues aspartate 71 and glutamate 163.

This sequence belongs to the glycosyl hydrolase 25 family.

This is an uncharacterized protein from Escherichia coli (strain K12).